We begin with the raw amino-acid sequence, 200 residues long: ADP-ribosylation factor-like protein 4A (200 aa).

Gly-2 carries the N-myristoyl glycine lipid modification. Residues 27 to 34 (GLDCAGKT), 75 to 79 (DVGGQ), and 134 to 137 (NKQD) contribute to the GTP site.

It belongs to the small GTPase superfamily. Arf family. Interacts with CYTH2. Interacts with KPNA2; the interaction is direct. Does not interact with ARL4A. Myristoylated. As to expression, expressed strongly in testis and liver. Expressed slightly in heart, spleen, lung and kidney.

It localises to the cell membrane. The protein localises to the cytoplasm. Its subcellular location is the nucleus. It is found in the nucleolus. In terms of biological role, small GTP-binding protein which cycles between an inactive GDP-bound and an active GTP-bound form, and the rate of cycling is regulated by guanine nucleotide exchange factors (GEF) and GTPase-activating proteins (GAP). GTP-binding protein that does not act as an allosteric activator of the cholera toxin catalytic subunit. Recruits CYTH1, CYTH2, CYTH3 and CYTH4 to the plasma membrane in GDP-bound form. The chain is ADP-ribosylation factor-like protein 4A (Arl4a) from Mus musculus (Mouse).